We begin with the raw amino-acid sequence, 247 residues long: CDP-diacylglycerol pyrophosphatase (247 aa).

A helical transmembrane segment spans residues 5 to 22; sequence IVLALVVSVAVAGGWLWM.

The protein belongs to the Cdh family.

It is found in the cell inner membrane. The catalysed reaction is a CDP-1,2-diacyl-sn-glycerol + H2O = a 1,2-diacyl-sn-glycero-3-phosphate + CMP + 2 H(+). It participates in phospholipid metabolism; CDP-diacylglycerol degradation; phosphatidate from CDP-diacylglycerol: step 1/1. In Enterobacter sp. (strain 638), this protein is CDP-diacylglycerol pyrophosphatase.